Reading from the N-terminus, the 430-residue chain is V-type ATP synthase beta chain 1 (430 aa).

The protein belongs to the ATPase alpha/beta chains family.

In terms of biological role, produces ATP from ADP in the presence of a proton gradient across the membrane. The V-type beta chain is a regulatory subunit. In Treponema pallidum (strain Nichols), this protein is V-type ATP synthase beta chain 1 (atpB1).